We begin with the raw amino-acid sequence, 112 residues long: T cell receptor alpha variable 34 (112 aa).

An N-terminal signal peptide occupies residues 1 to 21 (METVLQVLLGILGFQAAWVSS). Residues 22–112 (QELEQSPQSL…HAGIYLCGAD (91 aa)) enclose the Ig-like domain. Residues asparagine 38 and asparagine 42 are each glycosylated (N-linked (GlcNAc...) asparagine). A disulfide bridge connects residues cysteine 43 and cysteine 109.

As to quaternary structure, alpha-beta TR is a heterodimer composed of an alpha and beta chain; disulfide-linked. The alpha-beta TR is associated with the transmembrane signaling CD3 coreceptor proteins to form the TR-CD3 (TcR or TCR). The assembly of alpha-beta TR heterodimers with CD3 occurs in the endoplasmic reticulum where a single alpha-beta TR heterodimer associates with one CD3D-CD3E heterodimer, one CD3G-CD3E heterodimer and one CD247 homodimer forming a stable octameric structure. CD3D-CD3E and CD3G-CD3E heterodimers preferentially associate with TR alpha and TR beta chains, respectively. The association of the CD247 homodimer is the last step of TcR assembly in the endoplasmic reticulum and is required for transport to the cell surface.

It localises to the cell membrane. In terms of biological role, v region of the variable domain of T cell receptor (TR) alpha chain that participates in the antigen recognition. Alpha-beta T cell receptors are antigen specific receptors which are essential to the immune response and are present on the cell surface of T lymphocytes. Recognize peptide-major histocompatibility (MH) (pMH) complexes that are displayed by antigen presenting cells (APC), a prerequisite for efficient T cell adaptive immunity against pathogens. Binding of alpha-beta TR to pMH complex initiates TR-CD3 clustering on the cell surface and intracellular activation of LCK that phosphorylates the ITAM motifs of CD3G, CD3D, CD3E and CD247 enabling the recruitment of ZAP70. In turn ZAP70 phosphorylates LAT, which recruits numerous signaling molecules to form the LAT signalosome. The LAT signalosome propagates signal branching to three major signaling pathways, the calcium, the mitogen-activated protein kinase (MAPK) kinase and the nuclear factor NF-kappa-B (NF-kB) pathways, leading to the mobilization of transcription factors that are critical for gene expression and essential for T cell growth and differentiation. The T cell repertoire is generated in the thymus, by V-(D)-J rearrangement. This repertoire is then shaped by intrathymic selection events to generate a peripheral T cell pool of self-MH restricted, non-autoaggressive T cells. Post-thymic interaction of alpha-beta TR with the pMH complexes shapes TR structural and functional avidity. The protein is T cell receptor alpha variable 34 of Homo sapiens (Human).